A 289-amino-acid polypeptide reads, in one-letter code: MYG1 protein TC_0665 (289 aa).

Belongs to the MYG1 family.

In Chlamydia muridarum (strain MoPn / Nigg), this protein is MYG1 protein TC_0665.